Here is a 448-residue protein sequence, read N- to C-terminus: MYVEKILQSLQKKYPYQKEFHQAVYEAITSLKPLLDSDKSYEKHAILERLIEPEREIFFRVCWLDDNNQIQVNRGCRVEFNSAIGPYKGGLRFHPSVNESVIKFLGFEQVLKNSLTTLAMGGAKGGSDFDPKGKSEHEIMRFCQAFMNELYRHIGATTDVPAGDIGVGEREIGYLFGQYKKLVNRFEGVLTGKGLTYGGSLCRKEATGYGCVYFAEEMLQERNSSLEGKVCSVSGSGNVAIYTIEKLLQIGAKPVTASDSNGMIYDKDGIDLELLKEIKEVRRGRIKEYALEKKSAEYTPTENYPKGGNAVWHVPCFAAFPSATENELSVLDAKTLLSNGCKCVAEGANMPSSNEAIGLFLQAKISYGIGKAANAGGVSVSGLEMAQNASMHPWSFEVVDAKLHHIMKEIYKNVSQTAKEFKDPTNFVLGANIAGFRKVASAMIAQGV.

The substrate site is built by Lys88, Gln109, and Lys112. The active-site Proton donor is Lys124. A substrate-binding site is contributed by Gly163. NADP(+) contacts are provided by Thr207 and Asn238. Ser381 is a substrate binding site.

Belongs to the Glu/Leu/Phe/Val dehydrogenases family. In terms of assembly, homohexamer.

The enzyme catalyses L-glutamate + NADP(+) + H2O = 2-oxoglutarate + NH4(+) + NADPH + H(+). Its function is as follows. Catalyzes the reversible oxidative deamination of glutamate to alpha-ketoglutarate and ammonia. This is NADP-specific glutamate dehydrogenase (gdhA) from Helicobacter pylori (strain ATCC 700392 / 26695) (Campylobacter pylori).